The primary structure comprises 312 residues: Olfactory receptor 7D4 (312 aa).

The Extracellular segment spans residues 1-25; sequence MEAENLTELSKFLLLGLSDDPELQP. Asn5 is a glycosylation site (N-linked (GlcNAc...) asparagine). The chain crosses the membrane as a helical span at residues 26 to 46; that stretch reads VLFGLFLSMYLVTVLGNLLII. Residues 47-54 lie on the Cytoplasmic side of the membrane; that stretch reads LAVSSDSH. The chain crosses the membrane as a helical span at residues 55–75; sequence LHTPMYFFLSNLSFVDICFIS. Topologically, residues 76–99 are extracellular; it reads TTVPKMLVSIQARSKDISYMGCLT. Cysteines 97 and 189 form a disulfide. The chain crosses the membrane as a helical span at residues 100–120; the sequence is QVYFLMMFAGMDTFLLAVMAY. The Cytoplasmic segment spans residues 121–139; sequence DRFVAICHPLHYTVIMNPC. The helical transmembrane segment at 140–160 threads the bilayer; sequence LCGLLVLASWFIIFWFSLVHI. Over 161-197 the chain is Extracellular; sequence LLMKRLTFSTGTEIPHFFCEPAQVLKVACSNTLLNNI. A helical membrane pass occupies residues 198–217; sequence VLYVATALLGVFPVAGILFS. The Cytoplasmic portion of the chain corresponds to 218–237; it reads YSQIVSSLMGMSSTKGKYKA. The chain crosses the membrane as a helical span at residues 238–258; sequence FSTCGSHLCVVSLFYGTGLGV. At 259 to 271 the chain is on the extracellular side; that stretch reads YLSSAVTHSSQSS. The chain crosses the membrane as a helical span at residues 272–292; that stretch reads STASVMYAMVTPMLNPFIYSL. At 293–312 the chain is on the cytoplasmic side; the sequence is RNKDVKGALERLLSRADSCP.

This sequence belongs to the G-protein coupled receptor 1 family. Nasal olfactory epithelium.

Its subcellular location is the cell membrane. Odorant receptor. Selectively activated by androstenone and the related odorous steroid androstadienone. The polypeptide is Olfactory receptor 7D4 (OR7D4) (Homo sapiens (Human)).